A 155-amino-acid chain; its full sequence is Small ribosomal subunit protein uS7cz/uS7cy (155 aa).

The protein belongs to the universal ribosomal protein uS7 family. In terms of assembly, part of the 30S ribosomal subunit.

It is found in the plastid. The protein localises to the chloroplast. In terms of biological role, one of the primary rRNA binding proteins, it binds directly to 16S rRNA where it nucleates assembly of the head domain of the 30S subunit. The protein is Small ribosomal subunit protein uS7cz/uS7cy (rps7-A) of Angiopteris evecta (Mule's foot fern).